The sequence spans 405 residues: Argininosuccinate synthase (405 aa).

12–20 (AYSGGLDTS) contributes to the ATP binding site. L-citrulline-binding residues include Tyr92 and Ser97. Residue Gly122 coordinates ATP. Thr124, Asn128, and Asp129 together coordinate L-aspartate. An L-citrulline-binding site is contributed by Asn128. The L-citrulline site is built by Arg132, Ser181, Ser190, Glu266, and Tyr278.

Belongs to the argininosuccinate synthase family. Type 1 subfamily. Homotetramer.

The protein resides in the cytoplasm. It carries out the reaction L-citrulline + L-aspartate + ATP = 2-(N(omega)-L-arginino)succinate + AMP + diphosphate + H(+). Its pathway is amino-acid biosynthesis; L-arginine biosynthesis; L-arginine from L-ornithine and carbamoyl phosphate: step 2/3. The polypeptide is Argininosuccinate synthase (Cronobacter sakazakii (strain ATCC BAA-894) (Enterobacter sakazakii)).